We begin with the raw amino-acid sequence, 514 residues long: Photosystem II CP47 reaction center protein (514 aa).

6 consecutive transmembrane segments (helical) span residues 21–36, 109–123, 148–164, 211–226, 245–260, and 465–480; these read AVHL…WAGS, IVLS…VWHW, GGHL…FGTF, IAAG…FHLT, ALAS…AFVV, and CFAL…HGAR.

This sequence belongs to the PsbB/PsbC family. PsbB subfamily. PSII is composed of 1 copy each of membrane proteins PsbA, PsbB, PsbC, PsbD, PsbE, PsbF, PsbH, PsbI, PsbJ, PsbK, PsbL, PsbM, PsbT, PsbX, PsbY, PsbZ, Psb30/Ycf12, peripheral proteins PsbO, CyanoQ (PsbQ), PsbU, PsbV and a large number of cofactors. It forms dimeric complexes. Binds multiple chlorophylls. PSII binds additional chlorophylls, carotenoids and specific lipids. serves as cofactor.

The protein localises to the cellular thylakoid membrane. One of the components of the core complex of photosystem II (PSII). It binds chlorophyll and helps catalyze the primary light-induced photochemical processes of PSII. PSII is a light-driven water:plastoquinone oxidoreductase, using light energy to abstract electrons from H(2)O, generating O(2) and a proton gradient subsequently used for ATP formation. The sequence is that of Photosystem II CP47 reaction center protein from Prochlorothrix hollandica.